The chain runs to 251 residues: MEYQVKIEAFEGPLDLLLHLINRLEIDIYDIPVAKITEQYLLYVHTMRELELDVASEYLVMAATLLSIKSRMLLPKQEEELFDEEFLEEEEDPREELIEKLIEYRKYKSAAQNLKEREEERQKAFAKPPSDLSDYAKEIKLSEQKLSVTVYDMLGAFQKVLNRKKINRPSETRISRQEIPIEERMTQIVDCLKSSRKRMHFMELFPYEQKEHLVVTFLAILELMKNQLIIIEQEHNFSDIYITGSEAIHDA.

It belongs to the ScpA family. Component of a cohesin-like complex composed of ScpA, ScpB and the Smc homodimer, in which ScpA and ScpB bind to the head domain of Smc. The presence of the three proteins is required for the association of the complex with DNA.

It localises to the cytoplasm. Participates in chromosomal partition during cell division. May act via the formation of a condensin-like complex containing Smc and ScpB that pull DNA away from mid-cell into both cell halves. The polypeptide is Segregation and condensation protein A (Bacillus licheniformis (strain ATCC 14580 / DSM 13 / JCM 2505 / CCUG 7422 / NBRC 12200 / NCIMB 9375 / NCTC 10341 / NRRL NRS-1264 / Gibson 46)).